Reading from the N-terminus, the 216-residue chain is GTP-binding nuclear protein spi1 (216 aa).

The 165-residue stretch at 6 to 170 (NVPTFKLVLV…LWLARKLVGN (165 aa)) folds into the Small GTPase Ran-type domain. 17 to 24 (DGGTGKTT) lines the GTP pocket. Position 20 is a phosphothreonine (Thr20). Residues 36–44 (KKYIATLGV) are switch-I. GTP is bound by residues Gly67, 121-124 (NKVD), and 149-151 (SAK). Residues 67–83 (GQEKLGGLRDGYYIQGQ) are switch-II.

Belongs to the small GTPase superfamily. Ran family. As to quaternary structure, oligomer of dis3, pim1 and spi1. Found in a nuclear export complex with RanGTP, exportin and pre-miRNA. Interacts with fft3.

The protein localises to the nucleus. Its function is as follows. GTP-binding protein involved in nucleocytoplasmic transport. Required for the import of protein into the nucleus and also for RNA export. This chain is GTP-binding nuclear protein spi1 (spi1), found in Schizosaccharomyces pombe (strain 972 / ATCC 24843) (Fission yeast).